The primary structure comprises 92 residues: Signal recognition particle 19 kDa protein (92 aa).

It belongs to the SRP19 family. In terms of assembly, part of the signal recognition particle protein translocation system, which is composed of SRP and FtsY. Archaeal SRP consists of a 7S RNA molecule of 300 nucleotides and two protein subunits: SRP54 and SRP19.

It localises to the cytoplasm. Involved in targeting and insertion of nascent membrane proteins into the cytoplasmic membrane. Binds directly to 7S RNA and mediates binding of the 54 kDa subunit of the SRP. This Halorubrum lacusprofundi (strain ATCC 49239 / DSM 5036 / JCM 8891 / ACAM 34) protein is Signal recognition particle 19 kDa protein.